The sequence spans 336 residues: Coproporphyrin III ferrochelatase (336 aa).

Fe-coproporphyrin III contacts are provided by serine 52 and tyrosine 116. 2 residues coordinate Fe(2+): histidine 172 and glutamate 255.

This sequence belongs to the ferrochelatase family.

The protein resides in the cytoplasm. The enzyme catalyses Fe-coproporphyrin III + 2 H(+) = coproporphyrin III + Fe(2+). It functions in the pathway porphyrin-containing compound metabolism; protoheme biosynthesis. Involved in coproporphyrin-dependent heme b biosynthesis. Catalyzes the insertion of ferrous iron into coproporphyrin III to form Fe-coproporphyrin III. This chain is Coproporphyrin III ferrochelatase, found in Mycolicibacterium paratuberculosis (strain ATCC BAA-968 / K-10) (Mycobacterium paratuberculosis).